A 280-amino-acid polypeptide reads, in one-letter code: Meiotic spindle formation protein 2 (280 aa).

Positions Met1 to Val104 are disordered. Residues Leu72–Ser92 are compositionally biased toward basic and acidic residues. The span at Ser93–Val104 shows a compositional bias: low complexity.

As to quaternary structure, interacts with mei-1.

It localises to the cytoplasm. It is found in the cytoskeleton. The protein localises to the spindle pole. Its function is as follows. Forms a heterodimeric complex in conjunction with mei-1 which severs microtubules in vitro in an ATP-dependent manner. This activity may promote rapid reorganization of cellular microtubule arrays. May act to target mei-1 within the cell. Required specifically for meiotic spindle formation in the female germline. In Caenorhabditis elegans, this protein is Meiotic spindle formation protein 2 (mei-2).